The chain runs to 355 residues: Uroporphyrinogen decarboxylase (355 aa).

Residues 23–27, Asp72, Tyr148, Ser203, and His321 each bind substrate; that span reads RQAGR.

This sequence belongs to the uroporphyrinogen decarboxylase family. Homodimer.

The protein resides in the cytoplasm. The enzyme catalyses uroporphyrinogen III + 4 H(+) = coproporphyrinogen III + 4 CO2. It functions in the pathway porphyrin-containing compound metabolism; protoporphyrin-IX biosynthesis; coproporphyrinogen-III from 5-aminolevulinate: step 4/4. Functionally, catalyzes the decarboxylation of four acetate groups of uroporphyrinogen-III to yield coproporphyrinogen-III. The sequence is that of Uroporphyrinogen decarboxylase from Chloroflexus aurantiacus (strain ATCC 29366 / DSM 635 / J-10-fl).